Reading from the N-terminus, the 3414-residue chain is Genome polyprotein (3414 aa).

A disordered region spans residues 1 to 30 (MVKKAILKGKGGGPPRRVSKETATKTRQPR). At 2–98 (VKKAILKGKG…LQKRGKRRSA (97 aa)) the chain is on the cytoplasmic side. The propeptide at 97 to 117 (SATDWMSWLLVITLLGMTLAA) is ER anchor for the capsid protein C, removed in mature form by serine protease NS3. Residues 99–119 (TDWMSWLLVITLLGMTLAATV) form a helical membrane-spanning segment. Residues 120–242 (RKERDGSTVI…HLTRVEGWVW (123 aa)) are Extracellular-facing. Asn144 is a glycosylation site (N-linked (GlcNAc...) asparagine; by host). The chain crosses the membrane as a helical span at residues 243 to 260 (KNKLLALAMVTVVWLTLE). A topological domain (cytoplasmic) is located at residue Ser261. A helical membrane pass occupies residues 262 to 280 (VVTRVAVLVVLLCLAPVYA). Topologically, residues 281–727 (SRCTHLENRD…HTVLGGAFNS (447 aa)) are extracellular. 6 disulfides stabilise this stretch: Cys283-Cys310, Cys340-Cys396, Cys340-Cys401, Cys354-Cys385, Cys372-Cys396, and Cys372-Cys401. The tract at residues 378 to 391 (DRGWGNHCGLFGKG) is fusion peptide. Residue Asn434 is glycosylated (N-linked (GlcNAc...) asparagine; by host). 2 disulfides stabilise this stretch: Cys466/Cys570 and Cys587/Cys618. Residues 728–748 (IFGGVGFLPKLLLGVALAWLG) traverse the membrane as a helical segment. At 749–755 (LNMRNPT) the chain is on the extracellular side. A helical membrane pass occupies residues 756 to 776 (MSMSFLLAGGLVLAMTLGVGA). Topologically, residues 777–1132 (DVGCAVDTER…RSMVVADNGE (356 aa)) are extracellular. 6 disulfide bridges follow: Cys780-Cys791, Cys831-Cys920, Cys955-Cys1000, Cys1057-Cys1106, Cys1068-Cys1090, and Cys1089-Cys1093. 3 N-linked (GlcNAc...) asparagine; by host glycosylation sites follow: Asn861, Asn983, and Asn999. A helical transmembrane segment spans residues 1133-1153 (LLSEGGVPGIVALFVVLEYII). Topologically, residues 1154-1158 (RRRPS) are cytoplasmic. The helical transmembrane segment at 1159 to 1179 (TGTTVVWGGIVVLALLVTGMV) threads the bilayer. The Lumenal segment spans residues 1180–1187 (RIESLVRY). Residues 1188–1208 (VVAVGITFHLELGPEIVALML) form a helical membrane-spanning segment. Residues 1209–1293 (LQAVFELRVG…LLMALMTQQD (85 aa)) are Cytoplasmic-facing. A helical transmembrane segment spans residues 1294–1314 (VVTVHHGLVCFLSVASACSVW). Residues 1315 to 1327 (RLLKGHREQKGLT) lie on the Lumenal side of the membrane. The helical transmembrane segment at 1328 to 1348 (WVVPLAGLLGGEGSGIRLLAF) threads the bilayer. Over 1349–1359 (WELSAHRGRRS) the chain is Cytoplasmic. Residues 1360-1378 (FSEPLTVVGVMLTLASGMM) form a helical membrane-spanning segment. Over 1379–1382 (RHTS) the chain is Lumenal. A helical transmembrane segment spans residues 1383-1403 (QEALCALAVASFLLLMLVLGT). Topologically, residues 1404 to 1454 (RKMQLVAEWSGCVEWYPELVNEGGEVSLRVRQDAMGNFHLTELEKEERMMA) are cytoplasmic. The segment at 1410 to 1449 (AEWSGCVEWYPELVNEGGEVSLRVRQDAMGNFHLTELEKE) is interacts with and activates NS3 protease. Residues 1455-1475 (FWLIAGLAASAIHWSGILGVM) constitute an intramembrane region (helical). Topologically, residues 1476–2160 (GLWTLTEMLR…RMAERDAPEA (685 aa)) are cytoplasmic. One can recognise a Peptidase S7 domain in the interval 1490–1669 (SDLVFSGQGG…EAEKSRPNLP (180 aa)). Residues His1543, Asp1567, and Ser1627 each act as charge relay system; for serine protease NS3 activity in the active site. A Helicase ATP-binding domain is found at 1675–1831 (TGWTSKGQIT…ESNGAITSEE (157 aa)). Position 1688 to 1695 (1688 to 1695 (MHPGSGKT)) interacts with ATP. The DEAH box motif lies at 1779-1782 (DEAH). In terms of domain architecture, Helicase C-terminal spans 1841 to 2000 (DGFDWITEYE…TLRGPVATFY (160 aa)). Lys1883 is modified (N6-acetyllysine; by host). The helical transmembrane segment at 2161–2181 (FLTMVEMMVLGLATLGVIWCF) threads the bilayer. Residues 2182-2189 (VVRTSISR) are Lumenal-facing. Residues 2190 to 2210 (MMLGTLVLLASLLLLWAGGVG) constitute an intramembrane region (helical). A topological domain (lumenal) is located at residue Tyr2211. The chain crosses the membrane as a helical span at residues 2212–2232 (GNMAGVALIFYTLLTVLQPEA). Topologically, residues 2233-2244 (GKQRSSDDNKLA) are cytoplasmic. The chain crosses the membrane as a helical span at residues 2245–2265 (YFLLTLCSLAGLVAANEMGFL). The Lumenal segment spans residues 2266–2299 (EKTKADLSTALWSEREEPRPWSEWTNVDIQPARS). The segment at residues 2300–2320 (WGTYVLVVSLFTPYIIHQLQT) is an intramembrane region (helical). At 2321 to 2343 (KIQQLVNSAVASGAQAMRDLGGG) the chain is on the lumenal side. An intramembrane region (helical) is located at residues 2344–2364 (APFFGVAGHVMTLGVVSLIGA). The Lumenal segment spans residues 2365 to 2368 (TPTS). The chain crosses the membrane as a helical span at residues 2369–2389 (LMVGVGLAALHLAIVVSGLEA). Residues 2390 to 2432 (ELTQRAHKVFFSAMVRNPMVDGDVINPFGEGEAKPALYERKMS) lie on the Cytoplasmic side of the membrane. Residues 2433-2453 (LVLATVLCLMSVVMNRTVASI) traverse the membrane as a helical segment. Topologically, residues 2454–2477 (TEASAVGLAAAGQLLRPEADTLWT) are lumenal. The chain crosses the membrane as a helical span at residues 2478-2498 (MPVACGMSGVVRGSLWGFLPL). Residues 2499–3414 (GHRLWLRASG…WELRLESSII (916 aa)) are Cytoplasmic-facing. Residues 2512 to 2776 (GGSEGDTLGD…ELDLGVGTRC (265 aa)) enclose the mRNA cap 0-1 NS5-type MT domain. An S-adenosyl-L-methionine-binding site is contributed by Ser2567. Position 2567 is a phosphoserine (Ser2567). The active-site For 2'-O-MTase activity is Lys2572. Positions 2597, 2598, 2615, 2616, 2642, and 2643 each coordinate S-adenosyl-L-methionine. Asp2657 (for 2'-O-MTase activity) is an active-site residue. An S-adenosyl-L-methionine-binding site is contributed by Ile2658. Residues Lys2694 and Glu2730 each act as for 2'-O-MTase activity in the active site. Residues 2730–2734 (EMYYS) are interaction with host SCRIB. Tyr2732 is a binding site for S-adenosyl-L-methionine. Residues Glu2950, His2954, Cys2959, and Cys2962 each contribute to the Zn(2+) site. The region spanning 3040–3189 (GLFYADDTAG…RPLDDRFGKA (150 aa)) is the RdRp catalytic domain. His3224, Cys3240, and Cys3359 together coordinate Zn(2+).

In the N-terminal section; belongs to the class I-like SAM-binding methyltransferase superfamily. mRNA cap 0-1 NS5-type methyltransferase family. Homodimer. Interacts (via N-terminus) with host EXOC1 (via C-terminus); this interaction results in EXOC1 degradation through the proteasome degradation pathway. As to quaternary structure, forms heterodimers with envelope protein E in the endoplasmic reticulum and Golgi. In terms of assembly, homodimer; in the endoplasmic reticulum and Golgi. Interacts with protein prM. Interacts with non-structural protein 1. Homodimer; Homohexamer when secreted. Interacts with envelope protein E. As to quaternary structure, interacts (via N-terminus) with serine protease NS3. In terms of assembly, forms a heterodimer with serine protease NS3. May form homooligomers. Forms a heterodimer with NS2B. Interacts with NS4B. Interacts with unphosphorylated RNA-directed RNA polymerase NS5; this interaction stimulates RNA-directed RNA polymerase NS5 guanylyltransferase activity. As to quaternary structure, interacts with serine protease NS3. Interacts with NS1. In terms of assembly, homodimer. Interacts with host STAT2; this interaction inhibits the phosphorylation of the latter, and, when all viral proteins are present (polyprotein), targets STAT2 for degradation. Interacts with serine protease NS3. Interacts with host SCRIB; this interaction targets NS5 to the cell membrane periphery and nucleus, thereby allowing efficient host nuclear STAT1 inhibition. Specific enzymatic cleavages in vivo yield mature proteins. Cleavages in the lumen of endoplasmic reticulum are performed by host signal peptidase, whereas cleavages in the cytoplasmic side are performed by serine protease NS3. Signal cleavage at the 2K-4B site requires a prior NS3 protease-mediated cleavage at the 4A-2K site. Post-translationally, cleaved in post-Golgi vesicles by a host furin, releasing the mature small envelope protein M, and peptide pr. This cleavage is incomplete as up to 30% of viral particles still carry uncleaved prM. In terms of processing, N-glycosylated. N-glycosylated. The excreted form is glycosylated and this is required for efficient secretion of the protein from infected cells. Post-translationally, acetylated by host KAT5. Acetylation modulates NS3 RNA-binding and unwinding activities and plays an important positive role for viral replication. In terms of processing, phosphorylated on serines residues. This phosphorylation may trigger NS5 nuclear localization.

It localises to the virion. The protein localises to the host nucleus. Its subcellular location is the host cytoplasm. The protein resides in the host perinuclear region. It is found in the secreted. It localises to the virion membrane. The protein localises to the host endoplasmic reticulum membrane. It catalyses the reaction Selective hydrolysis of -Xaa-Xaa-|-Yaa- bonds in which each of the Xaa can be either Arg or Lys and Yaa can be either Ser or Ala.. The enzyme catalyses RNA(n) + a ribonucleoside 5'-triphosphate = RNA(n+1) + diphosphate. The catalysed reaction is a ribonucleoside 5'-triphosphate + H2O = a ribonucleoside 5'-diphosphate + phosphate + H(+). It carries out the reaction ATP + H2O = ADP + phosphate + H(+). It catalyses the reaction a 5'-end (5'-triphosphoguanosine)-ribonucleoside in mRNA + S-adenosyl-L-methionine = a 5'-end (N(7)-methyl 5'-triphosphoguanosine)-ribonucleoside in mRNA + S-adenosyl-L-homocysteine. The enzyme catalyses a 5'-end (N(7)-methyl 5'-triphosphoguanosine)-ribonucleoside in mRNA + S-adenosyl-L-methionine = a 5'-end (N(7)-methyl 5'-triphosphoguanosine)-(2'-O-methyl-ribonucleoside) in mRNA + S-adenosyl-L-homocysteine + H(+). In terms of biological role, plays a role in virus budding by binding to the cell membrane and gathering the viral RNA into a nucleocapsid that forms the core of a mature virus particle. During virus entry, may induce genome penetration into the host cytoplasm after hemifusion induced by the surface proteins. Can migrate to the cell nucleus where it modulates host functions. Its function is as follows. Inhibits RNA silencing by interfering with host Dicer. Prevents premature fusion activity of envelope proteins in trans-Golgi by binding to envelope protein E at pH6.0. After virion release in extracellular space, gets dissociated from E dimers. Functionally, acts as a chaperone for envelope protein E during intracellular virion assembly by masking and inactivating envelope protein E fusion peptide. prM is the only viral peptide matured by host furin in the trans-Golgi network probably to avoid catastrophic activation of the viral fusion activity in acidic Golgi compartment prior to virion release. prM-E cleavage is inefficient, and many virions are only partially matured. These uncleaved prM would play a role in immune evasion. In terms of biological role, may play a role in virus budding. Exerts cytotoxic effects by activating a mitochondrial apoptotic pathway through M ectodomain. May display a viroporin activity. Its function is as follows. Binds to host cell surface receptor and mediates fusion between viral and cellular membranes. Envelope protein is synthesized in the endoplasmic reticulum in the form of heterodimer with protein prM. They play a role in virion budding in the ER, and the newly formed immature particle is covered with 60 spikes composed of heterodimer between precursor prM and envelope protein E. The virion is transported to the Golgi apparatus where the low pH causes dissociation of PrM-E heterodimers and formation of E homodimers. prM-E cleavage is inefficient, and many virions are only partially matured. These uncleaved prM would play a role in immune evasion. Involved in immune evasion, pathogenesis and viral replication. Once cleaved off the polyprotein, is targeted to three destinations: the viral replication cycle, the plasma membrane and the extracellular compartment. Essential for viral replication. Required for formation of the replication complex and recruitment of other non-structural proteins to the ER-derived membrane structures. Excreted as a hexameric lipoparticle that plays a role against host immune response. Antagonizing the complement function. Binds to the host macrophages and dendritic cells. Inhibits signal transduction originating from Toll-like receptor 3 (TLR3). Functionally, component of the viral RNA replication complex that functions in virion assembly and antagonizes the host immune response. In terms of biological role, required cofactor for the serine protease function of NS3. May have membrane-destabilizing activity and form viroporins. Its function is as follows. Displays three enzymatic activities: serine protease, NTPase and RNA helicase. NS3 serine protease, in association with NS2B, performs its autocleavage and cleaves the polyprotein at dibasic sites in the cytoplasm: C-prM, NS2A-NS2B, NS2B-NS3, NS3-NS4A, NS4A-2K and NS4B-NS5. NS3 RNA helicase binds RNA and unwinds dsRNA in the 3' to 5' direction. Regulates the ATPase activity of the NS3 helicase activity. NS4A allows NS3 helicase to conserve energy during unwinding. Functionally, functions as a signal peptide for NS4B and is required for the interferon antagonism activity of the latter. In terms of biological role, induces the formation of ER-derived membrane vesicles where the viral replication takes place. Inhibits interferon (IFN)-induced host STAT1 phosphorylation and nuclear translocation, thereby preventing the establishment of cellular antiviral state by blocking the IFN-alpha/beta pathway. Inhibits STAT2 translocation in the nucleus after IFN-alpha treatment. Its function is as follows. Replicates the viral (+) and (-) genome, and performs the capping of genomes in the cytoplasm. NS5 methylates viral RNA cap at guanine N-7 and ribose 2'-O positions. Besides its role in RNA genome replication, also prevents the establishment of cellular antiviral state by blocking the interferon-alpha/beta (IFN-alpha/beta) signaling pathway. Inhibits host TYK2 and STAT2 phosphorylation, thereby preventing activation of JAK-STAT signaling pathway. The chain is Genome polyprotein from Tick-borne encephalitis virus European subtype (strain Neudoerfl) (NEUV).